Consider the following 175-residue polypeptide: Inorganic pyrophosphatase (175 aa).

Positions 30, 44, and 56 each coordinate substrate. Residues Asp66, Asp71, and Asp103 each coordinate Mg(2+). Tyr142 serves as a coordination point for substrate.

Belongs to the PPase family. Homohexamer. Mg(2+) serves as cofactor.

It is found in the cytoplasm. It carries out the reaction diphosphate + H2O = 2 phosphate + H(+). Catalyzes the hydrolysis of inorganic pyrophosphate (PPi) forming two phosphate ions. This is Inorganic pyrophosphatase from Buchnera aphidicola subsp. Baizongia pistaciae (strain Bp).